Consider the following 257-residue polypeptide: Probable amino-acid ABC transporter ATP-binding protein y4tH (257 aa).

Residues 6–251 (IVFDKVKKAY…PKEERTREFL (246 aa)) enclose the ABC transporter domain. ATP is bound at residue 38 to 45 (GPSGSGKS).

The protein belongs to the ABC transporter superfamily.

It is found in the cell inner membrane. Functionally, probably part of a binding-protein-dependent transport system y4tEFGH for an amino acid. Probably responsible for energy coupling to the transport system. The polypeptide is Probable amino-acid ABC transporter ATP-binding protein y4tH (Sinorhizobium fredii (strain NBRC 101917 / NGR234)).